The chain runs to 765 residues: Dipeptidyl peptidase 4 (765 aa).

Residues 1–6 (MKTPWK) lie on the Cytoplasmic side of the membrane. Residues 7 to 29 (VLLGLLGLAALITIITVPVVLLN) traverse the membrane as a helical; Signal-anchor for type II membrane protein segment. Residues 30–765 (KGNDAAADSR…HFIKQCFSLP (736 aa)) are Extracellular-facing. Residues N84, N91, N149, N178, N228, N280, N320, N330, and N331 are each glycosylated (N-linked (GlcNAc...) asparagine). 3 cysteine pairs are disulfide-bonded: C384–C393, C443–C446, and C453–C471. The N-linked (GlcNAc...) asparagine glycan is linked to N519. The active-site Charge relay system is the S629. C648 and C761 are disulfide-bonded. The N-linked (GlcNAc...) asparagine glycan is linked to N684. Residues D707 and H739 each act as charge relay system in the active site.

This sequence belongs to the peptidase S9B family. DPPIV subfamily. As to quaternary structure, monomer. Homodimer. Heterodimer with Seprase (FAP). Requires homodimerization for optimal dipeptidyl peptidase activity and T-cell costimulation. Found in a membrane raft complex, at least composed of BCL10, CARD11, DPP4 and IKBKB. Associates with collagen. Interacts with PTPRC; the interaction is enhanced in an interleukin-12-dependent manner in activated lymphocytes. Interacts (extracellular domain) with ADA; does not inhibit its dipeptidyl peptidase activity. Interacts with CAV1 (via the N-terminus); the interaction is direct. Interacts (via cytoplasmic tail) with CARD11 (via PDZ domain); its homodimerization is necessary for interaction with CARD11. Interacts with IGF2R; the interaction is direct. Interacts with GPC3. In terms of processing, the soluble form (Dipeptidyl peptidase 4 soluble form also named SDPP) derives from the membrane form (Dipeptidyl peptidase 4 membrane form also named MDPP) by proteolytic processing. Post-translationally, N- and O-Glycosylated. Phosphorylated. Mannose 6-phosphate residues in the carbohydrate moiety are necessary for interaction with IGF2R in activated T-cells. Mannose 6-phosphorylation is induced during T-cell activation.

The protein resides in the secreted. The protein localises to the cell membrane. Its subcellular location is the apical cell membrane. It localises to the cell projection. It is found in the invadopodium membrane. The protein resides in the lamellipodium membrane. The protein localises to the cell junction. Its subcellular location is the membrane raft. It catalyses the reaction Release of an N-terminal dipeptide, Xaa-Yaa-|-Zaa-, from a polypeptide, preferentially when Yaa is Pro, provided Zaa is neither Pro nor hydroxyproline.. Its activity is regulated as follows. Inhibited by GPC3 and diprotin A. Its function is as follows. Cell surface glycoprotein receptor involved in the costimulatory signal essential for T-cell receptor (TCR)-mediated T-cell activation. Acts as a positive regulator of T-cell coactivation, by binding at least ADA, CAV1, IGF2R, and PTPRC. Its binding to CAV1 and CARD11 induces T-cell proliferation and NF-kappa-B activation in a T-cell receptor/CD3-dependent manner. Its interaction with ADA also regulates lymphocyte-epithelial cell adhesion. In association with FAP is involved in the pericellular proteolysis of the extracellular matrix (ECM), the migration and invasion of endothelial cells into the ECM. May be involved in the promotion of lymphatic endothelial cells adhesion, migration and tube formation. When overexpressed, enhanced cell proliferation, a process inhibited by GPC3. Also acts as a serine exopeptidase with a dipeptidyl peptidase activity that regulates various physiological processes by cleaving peptides in the circulation, including many chemokines, mitogenic growth factors, neuropeptides and peptide hormones. Removes N-terminal dipeptides sequentially from polypeptides having unsubstituted N-termini provided that the penultimate residue is proline. The protein is Dipeptidyl peptidase 4 (DPP4) of Felis catus (Cat).